The sequence spans 228 residues: Urease accessory protein UreG (228 aa).

A GTP-binding site is contributed by 34–41 (GPVGSGKT).

This sequence belongs to the SIMIBI class G3E GTPase family. UreG subfamily. As to quaternary structure, homodimer. UreD, UreF and UreG form a complex that acts as a GTP-hydrolysis-dependent molecular chaperone, activating the urease apoprotein by helping to assemble the nickel containing metallocenter of UreC. The UreE protein probably delivers the nickel.

The protein localises to the cytoplasm. In terms of biological role, facilitates the functional incorporation of the urease nickel metallocenter. This process requires GTP hydrolysis, probably effectuated by UreG. This Rhodococcus opacus (strain B4) protein is Urease accessory protein UreG.